The following is a 329-amino-acid chain: Nuclear pore complex protein NUP35 (329 aa).

Disordered regions lie at residues 48–105 (NFGG…GKGK) and 123–167 (VSGS…PPRE). The span at 123–139 (VSGSPSWWSQSKAGSST) shows a compositional bias: polar residues. The 82-residue stretch at 183 to 264 (LDEEEWVTVY…KPVDPIQKQA (82 aa)) folds into the RRM Nup35-type domain. The disordered stretch occupies residues 271–315 (NQGFMPLPPPSSTRNTARPLSRPQYLQNGSAFSPQPSGGAMASPS). The segment covering 282-306 (STRNTARPLSRPQYLQNGSAFSPQP) has biased composition (polar residues).

It belongs to the Nup35 family. Part of the nuclear pore complex (NPC). The NPC has an eight-fold symmetrical structure comprising a central transport channel and two rings, the cytoplasmic and nuclear rings, to which eight filaments are attached. The cytoplasmic filaments have loose ends, while the nuclear filaments are joined in a distal ring, forming a nuclear basket. NPCs are highly dynamic in configuration and composition, and can be devided in 3 subcomplexes, the NUP62 subcomplex, the NUP107-160 subcomplex and the NUP93 subcomplex, containing approximately 30 different nucleoporin proteins.

It localises to the nucleus. It is found in the nuclear pore complex. This chain is Nuclear pore complex protein NUP35, found in Arabidopsis thaliana (Mouse-ear cress).